The primary structure comprises 522 residues: Cytochrome P450 4e5, mitochondrial (522 aa).

Residues Glu307 and Cys443 each contribute to the heme site.

Belongs to the cytochrome P450 family. It depends on heme as a cofactor.

The protein localises to the mitochondrion. Functionally, probably involved in steroid hormones biosynthesis. The polypeptide is Cytochrome P450 4e5, mitochondrial (Cyp4e5) (Drosophila mettleri (Fruit fly)).